The chain runs to 443 residues: tRNA modification GTPase MnmE (443 aa).

(6S)-5-formyl-5,6,7,8-tetrahydrofolate contacts are provided by arginine 23, glutamate 81, and lysine 119. A TrmE-type G domain is found at 214-369 (GMRVAILGKP…LLSALKERAI (156 aa)). GTP-binding positions include 224 to 229 (NVGKST), 243 to 249 (SEYPGTT), and 268 to 271 (DTAG). The Mg(2+) site is built by serine 228 and threonine 249. Lysine 443 serves as a coordination point for (6S)-5-formyl-5,6,7,8-tetrahydrofolate.

The protein belongs to the TRAFAC class TrmE-Era-EngA-EngB-Septin-like GTPase superfamily. TrmE GTPase family. In terms of assembly, homodimer. Heterotetramer of two MnmE and two MnmG subunits. K(+) is required as a cofactor.

The protein localises to the cytoplasm. In terms of biological role, exhibits a very high intrinsic GTPase hydrolysis rate. Involved in the addition of a carboxymethylaminomethyl (cmnm) group at the wobble position (U34) of certain tRNAs, forming tRNA-cmnm(5)s(2)U34. This is tRNA modification GTPase MnmE from Anaplasma marginale (strain St. Maries).